A 434-amino-acid polypeptide reads, in one-letter code: G2/mitotic-specific cyclin-2 (434 aa).

It belongs to the cyclin family. Cyclin AB subfamily. In terms of assembly, interacts with the CDC2 protein kinase to form a serine/threonine kinase holoenzyme complex also known as maturation promoting factor (MPF). The cyclin subunit imparts substrate specificity to the complex.

In terms of biological role, essential for the control of the cell cycle at the G2/M (mitosis) transition. The sequence is that of G2/mitotic-specific cyclin-2 from Medicago sativa subsp. varia (Alfalfa).